Reading from the N-terminus, the 169-residue chain is Photosystem I assembly protein Ycf3 (169 aa).

3 TPR repeats span residues 35–68 (AFTYYRDGMSAQSEGEYAEALLNYYEAMRLEIDP), 72–105 (SYILYNIGLIHTSNGEHVKALEYYFQALERNPSL), and 120–153 (GEQAIEQGDSENSEIWFDQAASYWKQAIALAPNN).

The protein belongs to the Ycf3 family.

The protein resides in the plastid. The protein localises to the chloroplast thylakoid membrane. Functionally, essential for the assembly of the photosystem I (PSI) complex. May act as a chaperone-like factor to guide the assembly of the PSI subunits. The sequence is that of Photosystem I assembly protein Ycf3 from Staurastrum punctulatum (Green alga).